The primary structure comprises 150 residues: D-aminoacyl-tRNA deacylase (150 aa).

The Gly-cisPro motif, important for rejection of L-amino acids signature appears at 136–137 (GP).

Belongs to the DTD family. Homodimer.

Its subcellular location is the cytoplasm. It catalyses the reaction glycyl-tRNA(Ala) + H2O = tRNA(Ala) + glycine + H(+). The catalysed reaction is a D-aminoacyl-tRNA + H2O = a tRNA + a D-alpha-amino acid + H(+). In terms of biological role, an aminoacyl-tRNA editing enzyme that deacylates mischarged D-aminoacyl-tRNAs. Also deacylates mischarged glycyl-tRNA(Ala), protecting cells against glycine mischarging by AlaRS. Acts via tRNA-based rather than protein-based catalysis; rejects L-amino acids rather than detecting D-amino acids in the active site. By recycling D-aminoacyl-tRNA to D-amino acids and free tRNA molecules, this enzyme counteracts the toxicity associated with the formation of D-aminoacyl-tRNA entities in vivo and helps enforce protein L-homochirality. The chain is D-aminoacyl-tRNA deacylase from Staphylococcus epidermidis (strain ATCC 35984 / DSM 28319 / BCRC 17069 / CCUG 31568 / BM 3577 / RP62A).